The following is a 289-amino-acid chain: ATP synthase gamma chain (289 aa).

Belongs to the ATPase gamma chain family. In terms of assembly, F-type ATPases have 2 components, CF(1) - the catalytic core - and CF(0) - the membrane proton channel. CF(1) has five subunits: alpha(3), beta(3), gamma(1), delta(1), epsilon(1). CF(0) has three main subunits: a, b and c.

It is found in the cell inner membrane. Its function is as follows. Produces ATP from ADP in the presence of a proton gradient across the membrane. The gamma chain is believed to be important in regulating ATPase activity and the flow of protons through the CF(0) complex. This Leptospira biflexa serovar Patoc (strain Patoc 1 / ATCC 23582 / Paris) protein is ATP synthase gamma chain.